Reading from the N-terminus, the 335-residue chain is Glycerol-3-phosphate dehydrogenase [NAD(P)+] (335 aa).

Residues tryptophan 11, arginine 30, and lysine 106 each coordinate NADPH. Lysine 106, glycine 135, and serine 137 together coordinate sn-glycerol 3-phosphate. NADPH is bound at residue alanine 139. Positions 190, 243, 253, 254, and 255 each coordinate sn-glycerol 3-phosphate. The active-site Proton acceptor is lysine 190. An NADPH-binding site is contributed by arginine 254. 2 residues coordinate NADPH: valine 278 and glutamate 280.

It belongs to the NAD-dependent glycerol-3-phosphate dehydrogenase family.

It is found in the cytoplasm. It carries out the reaction sn-glycerol 3-phosphate + NAD(+) = dihydroxyacetone phosphate + NADH + H(+). The enzyme catalyses sn-glycerol 3-phosphate + NADP(+) = dihydroxyacetone phosphate + NADPH + H(+). Its pathway is membrane lipid metabolism; glycerophospholipid metabolism. Catalyzes the reduction of the glycolytic intermediate dihydroxyacetone phosphate (DHAP) to sn-glycerol 3-phosphate (G3P), the key precursor for phospholipid synthesis. This chain is Glycerol-3-phosphate dehydrogenase [NAD(P)+], found in Paucimonas lemoignei (Pseudomonas lemoignei).